The primary structure comprises 207 residues: Probable isochorismatase (207 aa).

It belongs to the isochorismatase family.

The catalysed reaction is isochorismate + H2O = (2S,3S)-2,3-dihydroxy-2,3-dihydrobenzoate + pyruvate. The protein operates within antibiotic biosynthesis; phenazine biosynthesis. Involved in the biosynthesis of the antibiotic phenazine, a nitrogen-containing heterocyclic molecule having important roles in virulence, competition and biological control. This isochorismatase may remove pyruvate from chorismate during the formation of the phenazine ring structure and/or stabilize the phenazine biosynthetic complex. The protein is Probable isochorismatase (phzA) of Pseudomonas chlororaphis (Pseudomonas aureofaciens).